A 265-amino-acid chain; its full sequence is Sulfur carrier protein FdhD (265 aa).

Residue C107 is the Cysteine persulfide intermediate of the active site.

Belongs to the FdhD family.

The protein localises to the cytoplasm. Required for formate dehydrogenase (FDH) activity. Acts as a sulfur carrier protein that transfers sulfur from IscS to the molybdenum cofactor prior to its insertion into FDH. This chain is Sulfur carrier protein FdhD, found in Staphylococcus aureus (strain bovine RF122 / ET3-1).